The primary structure comprises 137 residues: Ribosome-binding factor A (137 aa).

This sequence belongs to the RbfA family. In terms of assembly, monomer. Binds 30S ribosomal subunits, but not 50S ribosomal subunits or 70S ribosomes.

It localises to the cytoplasm. Its function is as follows. One of several proteins that assist in the late maturation steps of the functional core of the 30S ribosomal subunit. Associates with free 30S ribosomal subunits (but not with 30S subunits that are part of 70S ribosomes or polysomes). Required for efficient processing of 16S rRNA. May interact with the 5'-terminal helix region of 16S rRNA. This chain is Ribosome-binding factor A, found in Erwinia tasmaniensis (strain DSM 17950 / CFBP 7177 / CIP 109463 / NCPPB 4357 / Et1/99).